A 313-amino-acid polypeptide reads, in one-letter code: Extracellular metalloprotease (313 aa).

Positions 1 to 34 are cleaved as a signal peptide; that stretch reads MKLVPRFRKQWFAYLTVLCLALAAAVSFGVPAKA. Residues 35–74 are disordered; that stretch reads AENPQTSVSNTGKEADATKNQTSKADQVSAPYEGTGKTSK. A propeptide spanning residues 35-93 is cleaved from the precursor; the sequence is AENPQTSVSNTGKEADATKNQTSKADQVSAPYEGTGKTSKSLYGGQTELEKNIQTLQPS. Residues 37 to 60 are compositionally biased toward polar residues; the sequence is NPQTSVSNTGKEADATKNQTSKAD. A disulfide bridge links C131 with C147. Residues H146 and S267 each act as charge relay system in the active site.

The protein belongs to the peptidase S1B family. As to quaternary structure, monomer.

It localises to the secreted. The chain is Extracellular metalloprotease (mpr) from Bacillus subtilis (strain 168).